The chain runs to 194 residues: Holliday junction branch migration complex subunit RuvA (194 aa).

The segment at 1–64 (MISRLTGKLV…EDAHLLFGFA (64 aa)) is domain I. The segment at 65 to 143 (TAEERKTFRQ…AHAVTDGLFA (79 aa)) is domain II. The interval 144-147 (AAPA) is flexible linker. The domain III stretch occupies residues 147–194 (AADETEDIVGTLLALGYSEREAKAAVKGVPKGTDVGEGVRLALKNLLK).

It belongs to the RuvA family. As to quaternary structure, homotetramer. Forms an RuvA(8)-RuvB(12)-Holliday junction (HJ) complex. HJ DNA is sandwiched between 2 RuvA tetramers; dsDNA enters through RuvA and exits via RuvB. An RuvB hexamer assembles on each DNA strand where it exits the tetramer. Each RuvB hexamer is contacted by two RuvA subunits (via domain III) on 2 adjacent RuvB subunits; this complex drives branch migration. In the full resolvosome a probable DNA-RuvA(4)-RuvB(12)-RuvC(2) complex forms which resolves the HJ.

It is found in the cytoplasm. Its function is as follows. The RuvA-RuvB-RuvC complex processes Holliday junction (HJ) DNA during genetic recombination and DNA repair, while the RuvA-RuvB complex plays an important role in the rescue of blocked DNA replication forks via replication fork reversal (RFR). RuvA specifically binds to HJ cruciform DNA, conferring on it an open structure. The RuvB hexamer acts as an ATP-dependent pump, pulling dsDNA into and through the RuvAB complex. HJ branch migration allows RuvC to scan DNA until it finds its consensus sequence, where it cleaves and resolves the cruciform DNA. The polypeptide is Holliday junction branch migration complex subunit RuvA (Neisseria meningitidis serogroup C / serotype 2a (strain ATCC 700532 / DSM 15464 / FAM18)).